The following is a 356-amino-acid chain: S-adenosylmethionine:tRNA ribosyltransferase-isomerase (356 aa).

The protein belongs to the QueA family. As to quaternary structure, monomer.

The protein localises to the cytoplasm. The catalysed reaction is 7-aminomethyl-7-carbaguanosine(34) in tRNA + S-adenosyl-L-methionine = epoxyqueuosine(34) in tRNA + adenine + L-methionine + 2 H(+). It functions in the pathway tRNA modification; tRNA-queuosine biosynthesis. Transfers and isomerizes the ribose moiety from AdoMet to the 7-aminomethyl group of 7-deazaguanine (preQ1-tRNA) to give epoxyqueuosine (oQ-tRNA). The chain is S-adenosylmethionine:tRNA ribosyltransferase-isomerase from Ralstonia nicotianae (strain ATCC BAA-1114 / GMI1000) (Ralstonia solanacearum).